The primary structure comprises 637 residues: Chaperone protein DnaK (637 aa).

Thr196 is subject to Phosphothreonine; by autocatalysis. The segment at 598–637 (AEAPGADAPEGQAPQDGGSKKGGEGAVENAEYEVIDGDGK) is disordered. Residues 627–637 (AEYEVIDGDGK) show a composition bias toward acidic residues.

Belongs to the heat shock protein 70 family.

Its function is as follows. Acts as a chaperone. This Chlorobium luteolum (strain DSM 273 / BCRC 81028 / 2530) (Pelodictyon luteolum) protein is Chaperone protein DnaK.